A 567-amino-acid chain; its full sequence is Allo-aromadendrene synthase TPS4FN (567 aa).

5 residues coordinate (2E,6E)-farnesyl diphosphate: R282, D319, D323, R462, and D465. D319 and D323 together coordinate Mg(2+). The short motif at 319–323 (DDIYD) is the DDXXD motif element. The Mg(2+) site is built by D465 and E473.

This sequence belongs to the terpene synthase family. Tpsb subfamily. Mg(2+) is required as a cofactor. Requires Mn(2+) as cofactor.

It carries out the reaction (2E,6E)-farnesyl diphosphate = alpha-humulene + diphosphate. The enzyme catalyses (2E,6E)-farnesyl diphosphate = (+)-valencene + diphosphate. It catalyses the reaction (2E)-geranyl diphosphate = beta-myrcene + diphosphate. The catalysed reaction is (2E,6E)-farnesyl diphosphate = allo-aromadendrene + diphosphate. It carries out the reaction (2E,6E)-farnesyl diphosphate + H2O = palustrol + diphosphate. The protein operates within secondary metabolite biosynthesis; terpenoid biosynthesis. Its function is as follows. Involved in sesquiterpene olefins biosynthesis, constituants of cannabinoids and terpenoids-rich resins. Catalyzes mainly the conversion of (2E)-farnesyl diphosphate to allo-aromadendrene, and also produces minor products such as alpha-humulene, valencene and palustrol. Can also use (2E)-geranyl diphosphate as substrate with low efficiency, producing minor amounts of myrcene. The polypeptide is Allo-aromadendrene synthase TPS4FN (Cannabis sativa (Hemp)).